We begin with the raw amino-acid sequence, 394 residues long: Tryptophan synthase beta chain (394 aa).

N6-(pyridoxal phosphate)lysine is present on Lys90.

This sequence belongs to the TrpB family. Tetramer of two alpha and two beta chains. The cofactor is pyridoxal 5'-phosphate.

The catalysed reaction is (1S,2R)-1-C-(indol-3-yl)glycerol 3-phosphate + L-serine = D-glyceraldehyde 3-phosphate + L-tryptophan + H2O. The protein operates within amino-acid biosynthesis; L-tryptophan biosynthesis; L-tryptophan from chorismate: step 5/5. The beta subunit is responsible for the synthesis of L-tryptophan from indole and L-serine. The polypeptide is Tryptophan synthase beta chain (Bacteroides thetaiotaomicron (strain ATCC 29148 / DSM 2079 / JCM 5827 / CCUG 10774 / NCTC 10582 / VPI-5482 / E50)).